The sequence spans 123 residues: Small ribosomal subunit protein uS12 (123 aa).

Positions 1–22 are disordered; the sequence is MATINQLVRQPRKRSVEKSDVP. Asp-89 carries the post-translational modification 3-methylthioaspartic acid. The interval 100-123 is disordered; the sequence is GSLDTSGVKGRNQGRSKYGTKRPK. Basic residues predominate over residues 111–123; that stretch reads NQGRSKYGTKRPK.

It belongs to the universal ribosomal protein uS12 family. Part of the 30S ribosomal subunit. Contacts proteins S8 and S17. May interact with IF1 in the 30S initiation complex.

Its function is as follows. With S4 and S5 plays an important role in translational accuracy. Interacts with and stabilizes bases of the 16S rRNA that are involved in tRNA selection in the A site and with the mRNA backbone. Located at the interface of the 30S and 50S subunits, it traverses the body of the 30S subunit contacting proteins on the other side and probably holding the rRNA structure together. The combined cluster of proteins S8, S12 and S17 appears to hold together the shoulder and platform of the 30S subunit. The chain is Small ribosomal subunit protein uS12 from Pseudomonas entomophila (strain L48).